The following is a 127-amino-acid chain: Fumarate reductase subunit C (127 aa).

The next 3 membrane-spanning stretches (helical) occupy residues 30-50 (ATVL…GSLV), 67-87 (IVVA…QTFF), and 107-127 (VVVL…LVIV).

This sequence belongs to the FrdC family. In terms of assembly, part of an enzyme complex containing four subunits: a flavoprotein (FrdA), an iron-sulfur protein (FrdB), and two hydrophobic anchor proteins (FrdC and FrdD).

Its subcellular location is the cell inner membrane. In terms of biological role, anchors the catalytic components of the fumarate reductase complex to the cell membrane, binds quinones. The chain is Fumarate reductase subunit C from Aliivibrio fischeri (strain ATCC 700601 / ES114) (Vibrio fischeri).